The primary structure comprises 434 residues: Maltotriose-binding protein (434 aa).

Positions 1–20 (MRRATYAFALLAILVLGVVA) are cleaved as a signal peptide. The disordered stretch occupies residues 28–52 (TTTPTQTSPATQPTTTQTPTQTETQ). A compositionally biased stretch (low complexity) spans 29 to 52 (TTPTQTSPATQPTTTQTPTQTETQ).

This sequence belongs to the bacterial solute-binding protein 1 family.

Involved in an abc transport system for maltotriose. Binds maltotriose much more tightly than maltose. The chain is Maltotriose-binding protein (malE) from Pyrococcus furiosus (strain ATCC 43587 / DSM 3638 / JCM 8422 / Vc1).